The sequence spans 328 residues: Phenylalanine--tRNA ligase alpha subunit (328 aa).

Glu-245 contributes to the Mg(2+) binding site.

It belongs to the class-II aminoacyl-tRNA synthetase family. Phe-tRNA synthetase alpha subunit type 1 subfamily. In terms of assembly, tetramer of two alpha and two beta subunits. It depends on Mg(2+) as a cofactor.

It localises to the cytoplasm. It catalyses the reaction tRNA(Phe) + L-phenylalanine + ATP = L-phenylalanyl-tRNA(Phe) + AMP + diphosphate + H(+). In Helicobacter pylori (strain G27), this protein is Phenylalanine--tRNA ligase alpha subunit.